The primary structure comprises 210 residues: Imidazoleglycerol-phosphate dehydratase (210 aa).

This sequence belongs to the imidazoleglycerol-phosphate dehydratase family.

It catalyses the reaction D-erythro-1-(imidazol-4-yl)glycerol 3-phosphate = 3-(imidazol-4-yl)-2-oxopropyl phosphate + H2O. The protein operates within amino-acid biosynthesis; L-histidine biosynthesis; L-histidine from 5-phospho-alpha-D-ribose 1-diphosphate: step 6/9. The sequence is that of Imidazoleglycerol-phosphate dehydratase (HIS3) from Candida glabrata (strain ATCC 2001 / BCRC 20586 / JCM 3761 / NBRC 0622 / NRRL Y-65 / CBS 138) (Yeast).